Here is a 443-residue protein sequence, read N- to C-terminus: sn-2 acyl-lipid omega-3 desaturase (ferredoxin), chloroplastic (443 aa).

Residues 1–51 constitute a chloroplast transit peptide; the sequence is MAGLVLSGCAIKPFSQSLPIPTKRFITNPSNINLLHPKDPIFSPNFHGFSR. 2 helical membrane passes run 120-140 and 143-163; these read MSYV…AAHL and WLVW…LFVL. Positions 165–169 match the Histidine box-1 motif; the sequence is HDCGH. Residues 201–205 carry the Histidine box-2 motif; it reads HRTHH. 2 helical membrane passes run 281 to 301 and 304 to 324; these read TICW…VGPV and LKLY…VTYL. A Histidine box-3 motif is present at residues 368-372; sequence HVIHH.

The protein belongs to the fatty acid desaturase type 1 family. Highly expressed in leaves and cotyledons, while no or little expression detected in mature seeds, roots and stems.

The protein resides in the plastid. The protein localises to the chloroplast membrane. It catalyses the reaction a (7Z,10Z)-hexadecadienoyl-containing glycerolipid + 2 reduced [2Fe-2S]-[ferredoxin] + O2 + 2 H(+) = a (7Z,10Z,13Z)-hexadecatrienoyl-containing glycerolipid + 2 oxidized [2Fe-2S]-[ferredoxin] + 2 H2O. The enzyme catalyses a (9Z,12Z)-octadecadienoyl-containing glycerolipid + 2 reduced [2Fe-2S]-[ferredoxin] + O2 + 2 H(+) = (9Z,12Z,15Z)-octadecatrienoyl-containing glycerolipid + 2 oxidized [2Fe-2S]-[ferredoxin] + 2 H2O. It functions in the pathway lipid metabolism; polyunsaturated fatty acid biosynthesis. In terms of biological role, chloroplast omega-3 fatty acid desaturase introduces the third double bond in the biosynthesis of 18:3, and probably also 16:3 fatty acids, important constituents of plant membranes. It is thought to use ferredoxin as an electron donor and to act on fatty acids esterified to galactolipids, sulfolipids and phosphatidylglycerol. The polypeptide is sn-2 acyl-lipid omega-3 desaturase (ferredoxin), chloroplastic (Helianthus annuus (Common sunflower)).